Reading from the N-terminus, the 90-residue chain is FMRFamide-like neuropeptides 27 (90 aa).

Positions 1-24 are cleaved as a signal peptide; sequence MFSFRKFLAFMLIVIALMASFSSA. Residues 25-36 constitute a propeptide that is removed on maturation; sequence QPIDEERPIFME. F61 is modified (phenylalanine amide). Residues 65-90 constitute a propeptide that is removed on maturation; sequence SSSPSDISMAELRAIYGGGPVEYVQL.

It belongs to the FARP (FMRFamide related peptide) family.

It is found in the secreted. In terms of biological role, FMRFamides and FMRFamide-like peptides are neuropeptides. The polypeptide is FMRFamide-like neuropeptides 27 (Caenorhabditis briggsae).